Consider the following 480-residue polypeptide: MKVLSVSSEVFPLIKTGGLADVVGALPIALKPYGVETKTLIPGYPAVMKAIRDPVVRLELPDLLGEAATILEVEHAGISFLVLDAPAYYSRTGGPYVDATGKDYPDNWRRFAALSLAGAEIAAGLLPGWRPDLVHAHDWQSALVPVYMRYYPTPELPSVLTIHNIAFQGQFGADIFPGLRLPAHAFSVEGIEYYGDVGFLKGGLQTAHALTTVSPSYAEEILTPEFGMGLEGVIASKAYNLYGIVNGIDADIWNPATDPMIAQTYSAATLKERAINRHRVVEHFGLEEDDGPIFCVVSRLTWQKGMDILAEVASEVVHMGGKLAILGAGDAALEGALFAAAGRHRGRVGVVGRHNEPMSHLMQAGCDAIIIPSRFEPCGLTQLYGLRSGCLPIVARTGGLNDTIIDANHAALQAKVATGIQFSPVTAEGLLQAMRRAMHLFQDRKVWTQMQKQGMKSDVSWGRSAERYAALYSSLVSRGA.

An ADP-alpha-D-glucose-binding site is contributed by lysine 15.

It belongs to the glycosyltransferase 1 family. Bacterial/plant glycogen synthase subfamily.

It catalyses the reaction [(1-&gt;4)-alpha-D-glucosyl](n) + ADP-alpha-D-glucose = [(1-&gt;4)-alpha-D-glucosyl](n+1) + ADP + H(+). It participates in glycan biosynthesis; glycogen biosynthesis. In terms of biological role, synthesizes alpha-1,4-glucan chains using ADP-glucose. This chain is Glycogen synthase, found in Rhizobium tropici.